A 360-amino-acid chain; its full sequence is Pyrimidine monooxygenase RutA (360 aa).

FMN is bound by residues 49 to 50 (IK), N115, E124, 140 to 141 (RY), and S190.

Belongs to the NtaA/SnaA/DszA monooxygenase family. RutA subfamily.

It carries out the reaction uracil + FMNH2 + NADH + O2 = (Z)-3-ureidoacrylate + FMN + NAD(+) + H2O + H(+). It catalyses the reaction thymine + FMNH2 + NADH + O2 = (Z)-2-methylureidoacrylate + FMN + NAD(+) + H2O + H(+). Catalyzes the pyrimidine ring opening between N-3 and C-4 by an unusual flavin hydroperoxide-catalyzed mechanism, adding oxygen atoms in the process to yield ureidoacrylate peracid, that immediately reacts with FMN forming ureidoacrylate and FMN-N(5)-oxide. The FMN-N(5)-oxide reacts spontaneously with NADH to produce FMN. Requires the flavin reductase RutF to regenerate FMN in vivo. The protein is Pyrimidine monooxygenase RutA of Pseudomonas syringae pv. syringae (strain B728a).